Reading from the N-terminus, the 540-residue chain is Dynein axonemal assembly factor 3 homolog (540 aa).

A disordered region spans residues 480 to 499 (AVTEAMPESTFKYDTDTDYG).

Belongs to the DNAAF3 family. In terms of tissue distribution, expressed in mechanosensory chordotonal (Ch) neurons, spermatocytes and spermatids (at protein level).

Its subcellular location is the cytoplasm. It is found in the dynein axonemal particle. Functionally, required for the assembly of axonemal inner and outer dynein arms. Involved in the cytoplasmic preassembly of dyneins into complexes before their transport into cilia. Essential for the development of axonemal dynein motors in the sensory cilium of mechanosensory chordotonal (Ch) neurons and sperm flagellum, and consequently, is required for the mechanotransduction process of hearing and sperm mobility. The chain is Dynein axonemal assembly factor 3 homolog from Drosophila melanogaster (Fruit fly).